The sequence spans 522 residues: Cytochrome P450 monooxygenase sirB (522 aa).

The chain crosses the membrane as a helical span at residues 22-42 (ASAILFCTLLTVFLFISQGTV). N-linked (GlcNAc...) asparagine glycosylation is present at Asn191. A helical transmembrane segment spans residues 304–324 (VLHLSFAATGTVAILITHMIY). Cys462 contributes to the heme binding site.

The protein belongs to the cytochrome P450 family. The cofactor is heme.

The protein localises to the membrane. The protein operates within mycotoxin biosynthesis. In terms of biological role, cytochrome P450 monooxygenase; part of the gene cluster that mediates the biosynthesis of sirodesmin PL, an epipolythiodioxopiperazine (ETP) characterized by a disulfide bridged cyclic dipeptide and that acts as a phytotoxin which is involved in the blackleg didease of canola. SirD catalyzes the O-prenylation of L-tyrosine (L-Tyr) in the presence of dimethylallyl diphosphate (DMAPP) to yield 4-O-dimethylallyl-L-Tyr, and therefore represents probably the first pathway-specific enzyme in the biosynthesis of sirodesmin PL. 4-O-dimethylallyl-L-Tyr, then undergoes condensation with L-Ser in a reaction catalyzed by the non-ribosomal peptide synthase sirP to form the diketopiperazine (DKP) backbone. Further bishydroxylation of the DKP performed by the cytochrome P450 monooxygenase sirC leads to the production of the intermediate phomamide. This step is essential to form the reactive thiol group required for toxicity of sirodesmin PL. The next steps of sirodesmin biosynthesis are not well understood yet, but some predictions could be made from intermediate compounds identification. Phomamide is converted into phomalizarine via oxidation, probably by sirT. Further oxidation, methylation (by sirM or sirN) and reduction steps convert phomalizarine to deacetyl sirodesmin. Finally, acetyltransferase sirH probably acetylates deacetyl sirodesmin to produce sirodesmin PL. This chain is Cytochrome P450 monooxygenase sirB, found in Leptosphaeria maculans (Blackleg fungus).